Consider the following 356-residue polypeptide: Tyrosine recombinase XerS (356 aa).

The region spanning 16 to 121 (LMPWFVLEYY…ALSCLYKYLT (106 aa)) is the Core-binding (CB) domain. Residues 169–354 (KFLDYVENEY…VNDEQKNALD (186 aa)) enclose the Tyr recombinase domain. Catalysis depends on residues Arg-210, Lys-234, His-306, Arg-309, and His-332. Catalysis depends on Tyr-341, which acts as the O-(3'-phospho-DNA)-tyrosine intermediate.

The protein belongs to the 'phage' integrase family. XerS subfamily.

It is found in the cytoplasm. With respect to regulation, ftsK is required for recombination. Functionally, site-specific tyrosine recombinase, which acts by catalyzing the cutting and rejoining of the recombining DNA molecules. Essential to convert dimers of the bacterial chromosome into monomers to permit their segregation at cell division. In Streptococcus thermophilus (strain ATCC BAA-250 / LMG 18311), this protein is Tyrosine recombinase XerS.